A 561-amino-acid chain; its full sequence is Inner membrane ABC transporter ATP-binding protein YddA (561 aa).

Residues 1–3 lie on the Cytoplasmic side of the membrane; sequence MIT. The helical transmembrane segment at 4-24 threads the bilayer; sequence IPITLRMLIAKYLCLLKPFWL. The Periplasmic segment spans residues 25-31; sequence RKNNKTS. Residues 32 to 52 traverse the membrane as a helical segment; that stretch reads VLLIIIILAMILGVVKIQVWL. The ABC transmembrane type-1 domain occupies 35–337; the sequence is IIIILAMILG…FIYKYDELAE (303 aa). Over 53 to 70 the chain is Cytoplasmic; it reads NDWNNDFFNALSQKETDK. A helical membrane pass occupies residues 71 to 91; it reads LWQLVLWFPALLGIFVLISVN. At 92-151 the chain is on the periplasmic side; it reads KTWLIKLLTIRWREWLTDYYLNRWFADKNYYFTQIYGEHKNTDNPDQRIAEDILLLISKT. Residues 152 to 172 traverse the membrane as a helical segment; the sequence is LSLSFGFIQSLSMLITFTVIL. The Cytoplasmic segment spans residues 173-187; that stretch reads WESAGTLSFTVGGTE. The chain crosses the membrane as a helical span at residues 188–208; it reads WNIQGYMVYTVVLIVIGGTLF. Topologically, residues 209 to 290 are periplasmic; it reads THKVGKRIRP…WQNIYSRSLS (82 aa). Residues 291–311 form a helical membrane-spanning segment; sequence VLPYFLLLPQFISGQINLGGL. The Cytoplasmic segment spans residues 312–561; sequence MKSRQAFMLV…DDICDISAVL (250 aa). The ABC transporter domain maps to 367-561; the sequence is VQVADASIRT…DDICDISAVL (195 aa). ATP is bound at residue 400–407; the sequence is GYSGAGKT.

This sequence belongs to the ABC transporter superfamily.

It localises to the cell inner membrane. This Escherichia coli (strain K12) protein is Inner membrane ABC transporter ATP-binding protein YddA (yddA).